A 34-amino-acid chain; its full sequence is Photosystem I reaction center subunit XII (34 aa).

A helical membrane pass occupies residues 9–29 (LIILGLIVVMHAGVLALRLGI).

Belongs to the PsaM family.

It localises to the cellular thylakoid membrane. This is Photosystem I reaction center subunit XII from Prochlorococcus marinus subsp. pastoris (strain CCMP1986 / NIES-2087 / MED4).